A 526-amino-acid polypeptide reads, in one-letter code: Cytochrome P450 monooxygenase 253 (526 aa).

Transmembrane regions (helical) follow at residues 13–33 (IASS…LLLI), 115–135 (FIMA…GYGK), and 306–326 (IGAG…AMTL). Cysteine 451 contributes to the heme binding site.

Belongs to the cytochrome P450 family. Heme serves as cofactor.

The protein localises to the membrane. It participates in secondary metabolite biosynthesis. Its function is as follows. Cytochrome P450 monooxygenase that is able to use delta(6)-protoilludene as a substrate to produce delta(6)-protoilludene-8-ol. The sequence is that of Cytochrome P450 monooxygenase 253 from Postia placenta (strain ATCC 44394 / Madison 698-R) (Brown rot fungus).